The chain runs to 272 residues: Tryptophan synthase alpha chain (272 aa).

Catalysis depends on proton acceptor residues Glu-60 and Asp-71.

Belongs to the TrpA family. As to quaternary structure, tetramer of two alpha and two beta chains.

The catalysed reaction is (1S,2R)-1-C-(indol-3-yl)glycerol 3-phosphate + L-serine = D-glyceraldehyde 3-phosphate + L-tryptophan + H2O. It functions in the pathway amino-acid biosynthesis; L-tryptophan biosynthesis; L-tryptophan from chorismate: step 5/5. The alpha subunit is responsible for the aldol cleavage of indoleglycerol phosphate to indole and glyceraldehyde 3-phosphate. The protein is Tryptophan synthase alpha chain of Methanosarcina acetivorans (strain ATCC 35395 / DSM 2834 / JCM 12185 / C2A).